Consider the following 337-residue polypeptide: MVVLGIETSCDDTSIAVYDSEKGIPSNVVTSQLIHAQFGGVYPEIAAREHTKNFLPVLDKALRDASITLSDIDAIATTFMPGLIVSLVAGVSGAKTLSFSLKKPLIPVHHIEAHIFANFITKEIEYPFLALVVSGGHTELILVKEFEDYIYLGGTLDDAVGEVYDKVARALGLGFPGGPLIDKLAKEGKEAIKFPRPLLNDEENKYNFSFSGLKSAVIREINKGIYKKEDITKSFQNAVVDVLVKKTVLACKEFGINRVVVAGGVSANSQLREEFLNIKDLEVHFPPMHLCTDNGAMVAYTGYKRFKEKGISVSLDFEAKARCRIDKFPQLLRSFHA.

Positions 110 and 114 each coordinate Fe cation. Residues 132-136 (VVSGG), Asp165, Gly178, Asp182, and Asn268 each bind substrate. Position 293 (Asp293) interacts with Fe cation.

This sequence belongs to the KAE1 / TsaD family. Requires Fe(2+) as cofactor.

The protein resides in the cytoplasm. The enzyme catalyses L-threonylcarbamoyladenylate + adenosine(37) in tRNA = N(6)-L-threonylcarbamoyladenosine(37) in tRNA + AMP + H(+). Its function is as follows. Required for the formation of a threonylcarbamoyl group on adenosine at position 37 (t(6)A37) in tRNAs that read codons beginning with adenine. Is involved in the transfer of the threonylcarbamoyl moiety of threonylcarbamoyl-AMP (TC-AMP) to the N6 group of A37, together with TsaE and TsaB. TsaD likely plays a direct catalytic role in this reaction. The protein is tRNA N6-adenosine threonylcarbamoyltransferase of Sulfurihydrogenibium sp. (strain YO3AOP1).